Reading from the N-terminus, the 287-residue chain is Urease accessory protein UreD (287 aa).

It belongs to the UreD family. In terms of assembly, ureD, UreF and UreG form a complex that acts as a GTP-hydrolysis-dependent molecular chaperone, activating the urease apoprotein by helping to assemble the nickel containing metallocenter of UreC. The UreE protein probably delivers the nickel.

It localises to the cytoplasm. In terms of biological role, required for maturation of urease via the functional incorporation of the urease nickel metallocenter. The polypeptide is Urease accessory protein UreD (Herpetosiphon aurantiacus (strain ATCC 23779 / DSM 785 / 114-95)).